Here is a 308-residue protein sequence, read N- to C-terminus: Electron transfer flavoprotein subunit alpha (308 aa).

252 to 280 (LYVAVGISGAIQHLAGMKDSKVIVAINKD) lines the FAD pocket.

The protein belongs to the ETF alpha-subunit/FixB family. In terms of assembly, heterodimer of an alpha and a beta subunit. FAD is required as a cofactor.

The electron transfer flavoprotein serves as a specific electron acceptor for other dehydrogenases. It transfers the electrons to the main respiratory chain via ETF-ubiquinone oxidoreductase (ETF dehydrogenase). In Paracoccus denitrificans, this protein is Electron transfer flavoprotein subunit alpha (etfA).